The following is a 1185-amino-acid chain: Liprin-alpha-4 (1185 aa).

2 coiled-coil regions span residues 24 to 123 and 165 to 499; these read ANFE…CLVS and DEKV…GRGG. 2 disordered regions span residues 638–709 and 721–757; these read SASP…RTLR and EEGKSALEDQGSNPSSSNSSQDSLHKGAKRKGIKSSI. S640 bears the Phosphoserine mark. Polar residues predominate over residues 645–656; the sequence is GRSTPKLTSRSA. At S681 the chain carries Phosphoserine. A compositionally biased stretch (basic and acidic residues) spans 684-695; the sequence is SREENREDKATI. A compositionally biased stretch (low complexity) spans 729-742; the sequence is DQGSNPSSSNSSQD. SAM domains lie at 829-895, 944-1008, and 1032-1101; these read WDGP…MVSL, NHEW…LKRL, and WTND…LLAL.

The protein belongs to the liprin family. Liprin-alpha subfamily. As to quaternary structure, forms homodimers and heterodimers with liprins-alpha and liprins-beta. Interacts with the second PTPase domain of PTPRD, PTPRF and PTPRS. Interacts with RIMS1 and RIMS2. Interacts with GIT1 and GIT2. Interacts with GRIP1. Interacts with KIF1A. Expressed only in the heart, brain, and skeletal muscle.

The protein localises to the cytoplasm. The protein resides in the cell surface. Its function is as follows. May regulate the disassembly of focal adhesions. May localize receptor-like tyrosine phosphatases type 2A at specific sites on the plasma membrane, possibly regulating their interaction with the extracellular environment and their association with substrates. The chain is Liprin-alpha-4 (PPFIA4) from Homo sapiens (Human).